The chain runs to 343 residues: Polyprenal reductase 2 (343 aa).

A run of 6 helical transmembrane segments spans residues 12–32 (GAWITVWIVSILPLVIASIPT), 66–86 (FAHFYVIGVVWTTLLLAATWM), 164–184 (MHILGYFAGLFFYVTAPLSLC), 223–243 (PLMKLGSLQWIGGAIFLWGWI), 266–286 (IIPYGDWFGMVSSPHFLAEIV), and 291–311 (LLIASGGTDITIWLLFGFVAA).

It belongs to the steroid 5-alpha reductase family. Polyprenal reductase subfamily. Expressed in roots, leaves, stems and flowers.

Its subcellular location is the endoplasmic reticulum membrane. The enzyme catalyses a di-trans,poly-cis-dolichal + NADP(+) = a di-trans,poly-cis-polyprenal + NADPH + H(+). The protein operates within protein modification; protein glycosylation. In terms of biological role, plays a key role in early steps of protein N-linked glycosylation by being involved in the conversion of polyprenol into dolichol. Acts as a polyprenal reductase that mediates the reduction of polyprenal into dolichal in a NADP-dependent mechanism. Dolichols are required for the synthesis of dolichol-linked monosaccharides and the oligosaccharide precursor used for N-glycosylation. Involved in the regulation of plant growth and reproductive processes. The polypeptide is Polyprenal reductase 2 (Arabidopsis thaliana (Mouse-ear cress)).